A 181-amino-acid chain; its full sequence is Large ribosomal subunit protein uL6 (181 aa).

This sequence belongs to the universal ribosomal protein uL6 family. Part of the 50S ribosomal subunit.

Its function is as follows. This protein binds to the 23S rRNA, and is important in its secondary structure. It is located near the subunit interface in the base of the L7/L12 stalk, and near the tRNA binding site of the peptidyltransferase center. This Synechococcus sp. (strain CC9605) protein is Large ribosomal subunit protein uL6.